We begin with the raw amino-acid sequence, 670 residues long: PML-RARA-regulated adapter molecule 1 (670 aa).

The disordered stretch occupies residues Met1 to Lys561. Positions Asp31–Lys43 are enriched in basic and acidic residues. Repeat copies occupy residues Lys70 to Lys81, Lys82 to Lys93, Lys94 to Lys105, and Lys106 to Lys117. A 4 X 12 AA repeats of K-P-P-[PQ]-P-[EQ]-[VAF]-T-D-L-P-K region spans residues Lys70–Arg165. Residues Asp114–Lys129 are compositionally biased toward basic and acidic residues. Ser340 is modified (phosphoserine). The segment covering Ser386–Ala398 has biased composition (low complexity). A compositionally biased stretch (pro residues) spans Pro454 to Pro463. The segment covering Glu504–Pro514 has biased composition (acidic residues). The segment covering Arg515 to Ala528 has biased composition (basic and acidic residues). The region spanning Lys571–Thr649 is the SH3 domain.

In terms of assembly, interacts with SKAP2, LCP2 and DBNL. May interact with LYN. Interacts with NEK6. In terms of processing, may be phosphorylated on tyrosines. In terms of tissue distribution, expressed in peripheral blood leukocytes and bone marrow. Expressed in monocytes, and to a lesser extent in granulocytes and lymphocytes. Not expressed in non hematopoietic tissues except in lung.

Its function is as follows. May be involved in myeloid differentiation. May be involved in integrin signaling in neutrophils. Binds to PtdIns(4)P. This is PML-RARA-regulated adapter molecule 1 (PRAM1) from Homo sapiens (Human).